Consider the following 61-residue polypeptide: Large ribosomal subunit protein uL30 (61 aa).

It belongs to the universal ribosomal protein uL30 family. In terms of assembly, part of the 50S ribosomal subunit.

The polypeptide is Large ribosomal subunit protein uL30 (Maricaulis maris (strain MCS10) (Caulobacter maris)).